The following is a 77-amino-acid chain: U8-lycotoxin-Ls1i (77 aa).

The N-terminal stretch at 1–20 is a signal peptide; it reads MKLIIFTGLVLFAIVSLIEV. Residues 21-26 constitute a propeptide that is removed on maturation; that stretch reads QADNER.

Belongs to the neurotoxin 19 (CSTX) family. 08 (U8-Lctx) subfamily. Contains 4 disulfide bonds. Expressed by the venom gland.

It is found in the secreted. This Lycosa singoriensis (Wolf spider) protein is U8-lycotoxin-Ls1i.